The primary structure comprises 208 residues: Small ribosomal subunit protein uS4 (208 aa).

The S4 RNA-binding domain occupies 99–165 (RRLDNVVFQL…PRLKEILSSL (67 aa)).

It belongs to the universal ribosomal protein uS4 family. In terms of assembly, part of the 30S ribosomal subunit. Contacts protein S5. The interaction surface between S4 and S5 is involved in control of translational fidelity.

One of the primary rRNA binding proteins, it binds directly to 16S rRNA where it nucleates assembly of the body of the 30S subunit. In terms of biological role, with S5 and S12 plays an important role in translational accuracy. This Desulfitobacterium hafniense (strain Y51) protein is Small ribosomal subunit protein uS4.